The sequence spans 110 residues: MEAIAKHRFAGISPQKARLVADQVRGKSVDQALEILTFSNKKAAVLVKKVLESAIANAEHNEGADIDDLNVAKIFVDEGPIMKRIMPRAKGRADRILKRSSHITIVVADR.

Belongs to the universal ribosomal protein uL22 family. Part of the 50S ribosomal subunit.

Functionally, this protein binds specifically to 23S rRNA; its binding is stimulated by other ribosomal proteins, e.g. L4, L17, and L20. It is important during the early stages of 50S assembly. It makes multiple contacts with different domains of the 23S rRNA in the assembled 50S subunit and ribosome. Its function is as follows. The globular domain of the protein is located near the polypeptide exit tunnel on the outside of the subunit, while an extended beta-hairpin is found that lines the wall of the exit tunnel in the center of the 70S ribosome. The polypeptide is Large ribosomal subunit protein uL22 (Aliivibrio fischeri (strain MJ11) (Vibrio fischeri)).